Here is a 332-residue protein sequence, read N- to C-terminus: Glycerol-3-phosphate dehydrogenase [NAD(P)+] (332 aa).

The NADPH site is built by W13, K34, and K108. Positions 108, 136, and 138 each coordinate sn-glycerol 3-phosphate. Residue A140 participates in NADPH binding. Sn-glycerol 3-phosphate is bound by residues K191, D244, S254, R255, and N256. K191 acts as the Proton acceptor in catalysis. R255 contacts NADPH. Residues V279 and E281 each coordinate NADPH.

Belongs to the NAD-dependent glycerol-3-phosphate dehydrogenase family.

The protein localises to the cytoplasm. It carries out the reaction sn-glycerol 3-phosphate + NAD(+) = dihydroxyacetone phosphate + NADH + H(+). It catalyses the reaction sn-glycerol 3-phosphate + NADP(+) = dihydroxyacetone phosphate + NADPH + H(+). Its pathway is membrane lipid metabolism; glycerophospholipid metabolism. In terms of biological role, catalyzes the reduction of the glycolytic intermediate dihydroxyacetone phosphate (DHAP) to sn-glycerol 3-phosphate (G3P), the key precursor for phospholipid synthesis. The protein is Glycerol-3-phosphate dehydrogenase [NAD(P)+] of Francisella philomiragia subsp. philomiragia (strain ATCC 25017 / CCUG 19701 / FSC 153 / O#319-036).